Consider the following 332-residue polypeptide: 4-hydroxy-3-methylbut-2-enyl diphosphate reductase (332 aa).

Position 34 (C34) interacts with [4Fe-4S] cluster. (2E)-4-hydroxy-3-methylbut-2-enyl diphosphate contacts are provided by H63 and H96. Dimethylallyl diphosphate is bound by residues H63 and H96. Isopentenyl diphosphate contacts are provided by H63 and H96. C118 contacts [4Fe-4S] cluster. H146 is a binding site for (2E)-4-hydroxy-3-methylbut-2-enyl diphosphate. H146 is a dimethylallyl diphosphate binding site. H146 is a binding site for isopentenyl diphosphate. E148 functions as the Proton donor in the catalytic mechanism. T186 lines the (2E)-4-hydroxy-3-methylbut-2-enyl diphosphate pocket. A [4Fe-4S] cluster-binding site is contributed by C216. (2E)-4-hydroxy-3-methylbut-2-enyl diphosphate-binding residues include S244, S245, N246, and S289. Residues S244, S245, N246, and S289 each contribute to the dimethylallyl diphosphate site. Residues S244, S245, N246, and S289 each coordinate isopentenyl diphosphate.

This sequence belongs to the IspH family. The cofactor is [4Fe-4S] cluster.

The catalysed reaction is isopentenyl diphosphate + 2 oxidized [2Fe-2S]-[ferredoxin] + H2O = (2E)-4-hydroxy-3-methylbut-2-enyl diphosphate + 2 reduced [2Fe-2S]-[ferredoxin] + 2 H(+). It carries out the reaction dimethylallyl diphosphate + 2 oxidized [2Fe-2S]-[ferredoxin] + H2O = (2E)-4-hydroxy-3-methylbut-2-enyl diphosphate + 2 reduced [2Fe-2S]-[ferredoxin] + 2 H(+). The protein operates within isoprenoid biosynthesis; dimethylallyl diphosphate biosynthesis; dimethylallyl diphosphate from (2E)-4-hydroxy-3-methylbutenyl diphosphate: step 1/1. It functions in the pathway isoprenoid biosynthesis; isopentenyl diphosphate biosynthesis via DXP pathway; isopentenyl diphosphate from 1-deoxy-D-xylulose 5-phosphate: step 6/6. Its function is as follows. Catalyzes the conversion of 1-hydroxy-2-methyl-2-(E)-butenyl 4-diphosphate (HMBPP) into a mixture of isopentenyl diphosphate (IPP) and dimethylallyl diphosphate (DMAPP). Acts in the terminal step of the DOXP/MEP pathway for isoprenoid precursor biosynthesis. This is 4-hydroxy-3-methylbut-2-enyl diphosphate reductase from Mycobacterium leprae (strain TN).